The chain runs to 272 residues: Bis(5'-nucleosyl)-tetraphosphatase, symmetrical (272 aa).

Belongs to the Ap4A hydrolase family.

The enzyme catalyses P(1),P(4)-bis(5'-adenosyl) tetraphosphate + H2O = 2 ADP + 2 H(+). Hydrolyzes diadenosine 5',5'''-P1,P4-tetraphosphate to yield ADP. In Chromohalobacter salexigens (strain ATCC BAA-138 / DSM 3043 / CIP 106854 / NCIMB 13768 / 1H11), this protein is Bis(5'-nucleosyl)-tetraphosphatase, symmetrical.